Here is a 216-residue protein sequence, read N- to C-terminus: Ribose-5-phosphate isomerase A (216 aa).

Substrate is bound by residues 26 to 29 (TGST), 79 to 82 (DGAD), and 92 to 95 (KGGG). The Proton acceptor role is filled by glutamate 101. A substrate-binding site is contributed by lysine 119.

This sequence belongs to the ribose 5-phosphate isomerase family. In terms of assembly, homodimer.

It catalyses the reaction aldehydo-D-ribose 5-phosphate = D-ribulose 5-phosphate. Its pathway is carbohydrate degradation; pentose phosphate pathway; D-ribose 5-phosphate from D-ribulose 5-phosphate (non-oxidative stage): step 1/1. Its function is as follows. Catalyzes the reversible conversion of ribose-5-phosphate to ribulose 5-phosphate. The polypeptide is Ribose-5-phosphate isomerase A (Legionella pneumophila subsp. pneumophila (strain Philadelphia 1 / ATCC 33152 / DSM 7513)).